The following is a 182-amino-acid chain: ATP-dependent protease subunit HslV (182 aa).

The active site involves T10. Positions 164, 167, and 170 each coordinate Na(+).

It belongs to the peptidase T1B family. HslV subfamily. As to quaternary structure, a double ring-shaped homohexamer of HslV is capped on each side by a ring-shaped HslU homohexamer. The assembly of the HslU/HslV complex is dependent on binding of ATP.

The protein resides in the cytoplasm. The enzyme catalyses ATP-dependent cleavage of peptide bonds with broad specificity.. Its activity is regulated as follows. Allosterically activated by HslU binding. Functionally, protease subunit of a proteasome-like degradation complex believed to be a general protein degrading machinery. The chain is ATP-dependent protease subunit HslV from Chelativorans sp. (strain BNC1).